Here is a 250-residue protein sequence, read N- to C-terminus: Leucyl/phenylalanyl-tRNA--protein transferase (250 aa).

Belongs to the L/F-transferase family.

The protein localises to the cytoplasm. It catalyses the reaction N-terminal L-lysyl-[protein] + L-leucyl-tRNA(Leu) = N-terminal L-leucyl-L-lysyl-[protein] + tRNA(Leu) + H(+). The catalysed reaction is N-terminal L-arginyl-[protein] + L-leucyl-tRNA(Leu) = N-terminal L-leucyl-L-arginyl-[protein] + tRNA(Leu) + H(+). It carries out the reaction L-phenylalanyl-tRNA(Phe) + an N-terminal L-alpha-aminoacyl-[protein] = an N-terminal L-phenylalanyl-L-alpha-aminoacyl-[protein] + tRNA(Phe). Functions in the N-end rule pathway of protein degradation where it conjugates Leu, Phe and, less efficiently, Met from aminoacyl-tRNAs to the N-termini of proteins containing an N-terminal arginine or lysine. This chain is Leucyl/phenylalanyl-tRNA--protein transferase, found in Cupriavidus necator (strain ATCC 17699 / DSM 428 / KCTC 22496 / NCIMB 10442 / H16 / Stanier 337) (Ralstonia eutropha).